The chain runs to 161 residues: Probable ubiquitin-conjugating enzyme E2 17 (161 aa).

Positions 15-161 constitute a UBC core domain; sequence IATNRLQKEF…TRWRFHDDKV (147 aa). Cysteine 99 acts as the Glycyl thioester intermediate in catalysis.

The protein belongs to the ubiquitin-conjugating enzyme family.

It carries out the reaction S-ubiquitinyl-[E1 ubiquitin-activating enzyme]-L-cysteine + [E2 ubiquitin-conjugating enzyme]-L-cysteine = [E1 ubiquitin-activating enzyme]-L-cysteine + S-ubiquitinyl-[E2 ubiquitin-conjugating enzyme]-L-cysteine.. Its pathway is protein modification; protein ubiquitination. In terms of biological role, accepts the ubiquitin from the E1 complex and catalyzes its covalent attachment to other proteins. The protein is Probable ubiquitin-conjugating enzyme E2 17 (UBC17) of Arabidopsis thaliana (Mouse-ear cress).